The chain runs to 146 residues: Small RNA-binding protein 11, chloroplastic (146 aa).

A chloroplast-targeting transit peptide spans 1 to 31; the sequence is MAALARIGGRHLKSVCLINSSASCFFTQRRG. The region spanning 34 to 112 is the RRM domain; sequence SKLFIGGLSF…RTIFVDYAKA (79 aa). A Phosphoserine modification is found at Ser-42.

Expressed in rosette leaves, cauline leaves, stems and flowers.

The protein resides in the plastid. The protein localises to the chloroplast. In terms of biological role, probable RNA-binding protein that may be involved in salt and oxidative stress tolerance. The sequence is that of Small RNA-binding protein 11, chloroplastic from Arabidopsis thaliana (Mouse-ear cress).